The following is a 506-amino-acid chain: Maturase K (506 aa).

Belongs to the intron maturase 2 family. MatK subfamily.

It localises to the plastid. It is found in the chloroplast. Usually encoded in the trnK tRNA gene intron. Probably assists in splicing its own and other chloroplast group II introns. In Ocimum basilicum (Sweet basil), this protein is Maturase K.